A 563-amino-acid chain; its full sequence is Testis-expressed basic protein 1 (563 aa).

Residues 3–23 form a helical membrane-spanning segment; that stretch reads VLEITLAVILTLLGLAILAIL. Positions 56–81 are disordered; the sequence is GSRHAYSTQSDTSYDNRERSKRDYTP. A compositionally biased stretch (basic and acidic residues) spans 69 to 79; sequence YDNRERSKRDY. A helical transmembrane segment spans residues 99 to 119; sequence ELILLLMCFILALSRSSIGSI. The tract at residues 311 to 563 is disordered; sequence SEMSIPQGQG…GRKYNKKVEE (253 aa). Residues 367 to 383 are compositionally biased toward basic and acidic residues; that stretch reads QVEKSEMGVPRRQESQV. Residues 384 to 395 show a composition bias toward low complexity; it reads KKSQSGVSKGQE. Composition is skewed to basic and acidic residues over residues 412–447 and 485–544; these read QVEKSELKVPKGQEGQVEKTEADVPKEQEVQEKKSE and EAQE…EKSK.

It localises to the membrane. In Homo sapiens (Human), this protein is Testis-expressed basic protein 1.